An 87-amino-acid polypeptide reads, in one-letter code: Neurotoxin LmNaTx64.1 (87 aa).

Residues 1–18 (MKILFLIILTAFFIGVHC) form the signal peptide. Residues 19–85 (KHGYPIIRAG…TWSRATNKCK (67 aa)) form the LCN-type CS-alpha/beta domain. 4 cysteine pairs are disulfide-bonded: Cys-33-Cys-84, Cys-37-Cys-58, Cys-44-Cys-65, and Cys-48-Cys-67. Cys-84 carries the post-translational modification Cysteine amide.

It belongs to the long (4 C-C) scorpion toxin superfamily. Sodium channel inhibitor family. Beta subfamily. In terms of tissue distribution, expressed by the venom gland.

It is found in the secreted. Its function is as follows. Binds voltage-independently at site-4 of sodium channels (Nav) and shift the voltage of activation toward more negative potentials thereby affecting sodium channel activation and promoting spontaneous and repetitive firing. The chain is Neurotoxin LmNaTx64.1 from Lychas mucronatus (Chinese swimming scorpion).